A 158-amino-acid polypeptide reads, in one-letter code: Transcription elongation factor GreA (158 aa).

The stretch at 4 to 70 forms a coiled coil; the sequence is QKQYPMTQEG…IEQDIQRIEH (67 aa).

Belongs to the GreA/GreB family.

Necessary for efficient RNA polymerase transcription elongation past template-encoded arresting sites. The arresting sites in DNA have the property of trapping a certain fraction of elongating RNA polymerases that pass through, resulting in locked ternary complexes. Cleavage of the nascent transcript by cleavage factors such as GreA or GreB allows the resumption of elongation from the new 3'terminus. GreA releases sequences of 2 to 3 nucleotides. The polypeptide is Transcription elongation factor GreA (Staphylococcus aureus (strain Mu3 / ATCC 700698)).